The primary structure comprises 204 residues: dTTP/UTP pyrophosphatase (204 aa).

Asp-68 acts as the Proton acceptor in catalysis.

Belongs to the Maf family. YhdE subfamily. The cofactor is a divalent metal cation.

It is found in the cytoplasm. The enzyme catalyses dTTP + H2O = dTMP + diphosphate + H(+). The catalysed reaction is UTP + H2O = UMP + diphosphate + H(+). Its function is as follows. Nucleoside triphosphate pyrophosphatase that hydrolyzes dTTP and UTP. May have a dual role in cell division arrest and in preventing the incorporation of modified nucleotides into cellular nucleic acids. This Thermotoga petrophila (strain ATCC BAA-488 / DSM 13995 / JCM 10881 / RKU-1) protein is dTTP/UTP pyrophosphatase.